Consider the following 156-residue polypeptide: Small ribosomal subunit protein uS7 (156 aa).

The protein belongs to the universal ribosomal protein uS7 family. In terms of assembly, part of the 30S ribosomal subunit. Contacts proteins S9 and S11.

Its function is as follows. One of the primary rRNA binding proteins, it binds directly to 16S rRNA where it nucleates assembly of the head domain of the 30S subunit. Is located at the subunit interface close to the decoding center, probably blocks exit of the E-site tRNA. The protein is Small ribosomal subunit protein uS7 of Pediococcus pentosaceus (strain ATCC 25745 / CCUG 21536 / LMG 10740 / 183-1w).